Here is a 178-residue protein sequence, read N- to C-terminus: MAELLTLARPYAKAAFAYASEQGATDNWSTALQVLSAAVQDEAFSAYLNRPELTPSEQVELFAKILGEDQSQAVSNFLTLLADNDRLILLPEIAEEYEELKSQNNNVVDVVIESAFPLSAEQEQLLKTALEKRYNSSVTISVEVKPALIAGVVIRAGDQVIDDSALNKLEKMRTRLLA.

It belongs to the ATPase delta chain family. As to quaternary structure, F-type ATPases have 2 components, F(1) - the catalytic core - and F(0) - the membrane proton channel. F(1) has five subunits: alpha(3), beta(3), gamma(1), delta(1), epsilon(1). F(0) has three main subunits: a(1), b(2) and c(10-14). The alpha and beta chains form an alternating ring which encloses part of the gamma chain. F(1) is attached to F(0) by a central stalk formed by the gamma and epsilon chains, while a peripheral stalk is formed by the delta and b chains.

It localises to the cell inner membrane. Its function is as follows. F(1)F(0) ATP synthase produces ATP from ADP in the presence of a proton or sodium gradient. F-type ATPases consist of two structural domains, F(1) containing the extramembraneous catalytic core and F(0) containing the membrane proton channel, linked together by a central stalk and a peripheral stalk. During catalysis, ATP synthesis in the catalytic domain of F(1) is coupled via a rotary mechanism of the central stalk subunits to proton translocation. This protein is part of the stalk that links CF(0) to CF(1). It either transmits conformational changes from CF(0) to CF(1) or is implicated in proton conduction. This is ATP synthase subunit delta from Acinetobacter baylyi (strain ATCC 33305 / BD413 / ADP1).